A 77-amino-acid polypeptide reads, in one-letter code: Cell division topological specificity factor (77 aa).

Belongs to the MinE family.

Functionally, prevents the cell division inhibition by proteins MinC and MinD at internal division sites while permitting inhibition at polar sites. This ensures cell division at the proper site by restricting the formation of a division septum at the midpoint of the long axis of the cell. This is Cell division topological specificity factor from Helicobacter acinonychis (strain Sheeba).